The primary structure comprises 148 residues: UPF0178 protein SUN_1096 (148 aa).

It belongs to the UPF0178 family.

The polypeptide is UPF0178 protein SUN_1096 (Sulfurovum sp. (strain NBC37-1)).